Reading from the N-terminus, the 383-residue chain is Beta-1,3-galactosyltransferase 4 (383 aa).

Topologically, residues 1 to 8 (MPLSLFRR) are cytoplasmic. Residues 9–29 (LLLAALLLVIIWTLFGPSGIG) form a helical membrane-spanning segment. The Lumenal portion of the chain corresponds to 30–383 (EELLSLSLAS…RCRVIAWLHS (354 aa)). The N-linked (GlcNAc...) asparagine glycan is linked to Asn-149.

It belongs to the glycosyltransferase 31 family.

The protein localises to the golgi apparatus membrane. It catalyses the reaction a ganglioside GM2 (d18:1(4E)) + UDP-alpha-D-galactose = a ganglioside GM1 (d18:1(4E)) + UDP + H(+). The catalysed reaction is a ganglioside GM2 + UDP-alpha-D-galactose = a ganglioside GM1 + UDP + H(+). The enzyme catalyses a ganglioside GD2 (d18:1(4E)) + UDP-alpha-D-galactose = a ganglioside GD1b (d18:1(4E)) + UDP + H(+). It carries out the reaction a ganglioside GA2 (d18:1(4E)) + UDP-alpha-D-galactose = a ganglioside GA1 (d18:1(4E)) + UDP + H(+). It functions in the pathway protein modification; protein glycosylation. Involved in GM1/GD1B/GA1 ganglioside biosynthesis. This is Beta-1,3-galactosyltransferase 4 (B3GALT4) from Canis lupus familiaris (Dog).